Here is a 275-residue protein sequence, read N- to C-terminus: Formamidopyrimidine-DNA glycosylase (275 aa).

Proline 2 serves as the catalytic Schiff-base intermediate with DNA. Glutamate 3 (proton donor) is an active-site residue. The active-site Proton donor; for beta-elimination activity is lysine 58. DNA-binding residues include histidine 91 and arginine 110. The FPG-type zinc-finger motif lies at 238–272 (QVYGQTGKPCPRCGQAIVKLKVGGRGTHICPKCQK). Arginine 262 acts as the Proton donor; for delta-elimination activity in catalysis.

The protein belongs to the FPG family. Monomer. Requires Zn(2+) as cofactor.

The catalysed reaction is Hydrolysis of DNA containing ring-opened 7-methylguanine residues, releasing 2,6-diamino-4-hydroxy-5-(N-methyl)formamidopyrimidine.. It carries out the reaction 2'-deoxyribonucleotide-(2'-deoxyribose 5'-phosphate)-2'-deoxyribonucleotide-DNA = a 3'-end 2'-deoxyribonucleotide-(2,3-dehydro-2,3-deoxyribose 5'-phosphate)-DNA + a 5'-end 5'-phospho-2'-deoxyribonucleoside-DNA + H(+). Functionally, involved in base excision repair of DNA damaged by oxidation or by mutagenic agents. Acts as a DNA glycosylase that recognizes and removes damaged bases. Has a preference for oxidized purines, such as 7,8-dihydro-8-oxoguanine (8-oxoG). Has AP (apurinic/apyrimidinic) lyase activity and introduces nicks in the DNA strand. Cleaves the DNA backbone by beta-delta elimination to generate a single-strand break at the site of the removed base with both 3'- and 5'-phosphates. The polypeptide is Formamidopyrimidine-DNA glycosylase (Streptococcus pyogenes serotype M6 (strain ATCC BAA-946 / MGAS10394)).